Reading from the N-terminus, the 198-residue chain is Large ribosomal subunit protein eL19 (198 aa).

Disordered regions lie at residues 66-85 (YEEARRKGRHTGYGKRRGTA) and 150-177 (KRAKQLADQAQARRDKNKESRKRREERQ). Residues 71 to 83 (RKGRHTGYGKRRG) show a composition bias toward basic residues. A compositionally biased stretch (basic and acidic residues) spans 160–177 (QARRDKNKESRKRREERQ).

This sequence belongs to the eukaryotic ribosomal protein eL19 family.

The chain is Large ribosomal subunit protein eL19 (rpl-19) from Caenorhabditis elegans.